Here is a 1241-residue protein sequence, read N- to C-terminus: DNA-directed RNA polymerase subunit beta (1241 aa).

The protein belongs to the RNA polymerase beta chain family. In terms of assembly, the RNAP catalytic core consists of 2 alpha, 1 beta, 1 beta' and 1 omega subunit. When a sigma factor is associated with the core the holoenzyme is formed, which can initiate transcription.

The catalysed reaction is RNA(n) + a ribonucleoside 5'-triphosphate = RNA(n+1) + diphosphate. In terms of biological role, DNA-dependent RNA polymerase catalyzes the transcription of DNA into RNA using the four ribonucleoside triphosphates as substrates. The sequence is that of DNA-directed RNA polymerase subunit beta from Clostridium botulinum (strain Alaska E43 / Type E3).